Consider the following 527-residue polypeptide: Peptidoglycan O-acetyltransferase (527 aa).

11 helical membrane passes run 11–31 (VFVL…VGFL), 55–75 (LFFY…SIVF), 96–116 (LILG…TDFF), 131–151 (LHLI…AYLM), 187–207 (HFLD…GPIV), 228–248 (NIAL…VIAD), 280–300 (LYFD…FFNI), 352–372 (LILV…FIIW), 397–417 (MPKI…WVFF), 463–483 (IMYA…SFCL), and 505–525 (LLLS…FLYF). H363 is a catalytic residue.

It belongs to the membrane-bound acyltransferase family.

Its subcellular location is the cell membrane. Catalyzes the O-acetylation of peptidoglycan (PG), an important mechanism that appears to confer lysozyme resistance and contributes to pathogen persistence in the host. In Helicobacter pylori (strain ATCC 700392 / 26695) (Campylobacter pylori), this protein is Peptidoglycan O-acetyltransferase (patA).